The chain runs to 196 residues: Dephospho-CoA kinase (196 aa).

A DPCK domain is found at 6 to 196 (AIALTGGIGT…QVERFLKTLL (191 aa)). Position 14–19 (14–19 (GTGKST)) interacts with ATP.

Belongs to the CoaE family.

The protein resides in the cytoplasm. The catalysed reaction is 3'-dephospho-CoA + ATP = ADP + CoA + H(+). It participates in cofactor biosynthesis; coenzyme A biosynthesis; CoA from (R)-pantothenate: step 5/5. Its function is as follows. Catalyzes the phosphorylation of the 3'-hydroxyl group of dephosphocoenzyme A to form coenzyme A. The protein is Dephospho-CoA kinase of Helicobacter pylori (strain ATCC 700392 / 26695) (Campylobacter pylori).